Consider the following 102-residue polypeptide: MKQNKIEVYGIPDEVGRCPGCQSVTKLLKELNAPFTFYKVLTNNGKIEYDRPLIVSLAKRAGFTSLNIRYPVIFINDSRQKNIKHFKETLISLGYDRDIIED.

This is an uncharacterized protein from Enterobacteria phage T4 (Bacteriophage T4).